Consider the following 260-residue polypeptide: Cytochrome c oxidase subunit 3 (260 aa).

6 helical membrane passes run 30–50 (LILW…VLLV), 81–101 (GMIL…WAFF), 126–146 (FLVP…VTWA), 158–178 (AIQS…LQAW), 196–216 (FFVA…FLAV), and 239–259 (WYWH…YWWG).

It belongs to the cytochrome c oxidase subunit 3 family. Component of the cytochrome c oxidase (complex IV, CIV), a multisubunit enzyme composed of a catalytic core of 3 subunits and several supernumerary subunits. The complex exists as a monomer or a dimer and forms supercomplexes (SCs) in the inner mitochondrial membrane with ubiquinol-cytochrome c oxidoreductase (cytochrome b-c1 complex, complex III, CIII).

Its subcellular location is the mitochondrion inner membrane. It carries out the reaction 4 Fe(II)-[cytochrome c] + O2 + 8 H(+)(in) = 4 Fe(III)-[cytochrome c] + 2 H2O + 4 H(+)(out). Functionally, component of the cytochrome c oxidase, the last enzyme in the mitochondrial electron transport chain which drives oxidative phosphorylation. The respiratory chain contains 3 multisubunit complexes succinate dehydrogenase (complex II, CII), ubiquinol-cytochrome c oxidoreductase (cytochrome b-c1 complex, complex III, CIII) and cytochrome c oxidase (complex IV, CIV), that cooperate to transfer electrons derived from NADH and succinate to molecular oxygen, creating an electrochemical gradient over the inner membrane that drives transmembrane transport and the ATP synthase. Cytochrome c oxidase is the component of the respiratory chain that catalyzes the reduction of oxygen to water. Electrons originating from reduced cytochrome c in the intermembrane space (IMS) are transferred via the dinuclear copper A center (CU(A)) of subunit 2 and heme A of subunit 1 to the active site in subunit 1, a binuclear center (BNC) formed by heme A3 and copper B (CU(B)). The BNC reduces molecular oxygen to 2 water molecules using 4 electrons from cytochrome c in the IMS and 4 protons from the mitochondrial matrix. The protein is Cytochrome c oxidase subunit 3 (COIII) of Pisaster ochraceus (Ochre sea star).